Here is a 288-residue protein sequence, read N- to C-terminus: MKITVPATSANIGPGFDSVGVALSKYLSIEVLEEAASWHISHDLGDIPSDEHNLLLVTALKVAPDLRPHRLRMVSDIPLARGLGSSSSVIVAGIELANQLADLNLTDSEKLDIATEIEGHPDNVAPALFGNLVISSYINQKVNYVVADFPKSSFIAFIPNYELKTSDSRDVLPTDLTYKEAVAASSIANVAIAGLLTGDLKTAGEAIMNDRFHERFRQSLVREFAQIKEIGKRNGAYASYLSGAGPTVIVLTDQDKADQIKADIDALELSGSTHLLRIDAKGVRVEKN.

Residue 78–88 (PLARGLGSSSS) coordinates ATP.

It belongs to the GHMP kinase family. Homoserine kinase subfamily.

The protein localises to the cytoplasm. The catalysed reaction is L-homoserine + ATP = O-phospho-L-homoserine + ADP + H(+). It functions in the pathway amino-acid biosynthesis; L-threonine biosynthesis; L-threonine from L-aspartate: step 4/5. In terms of biological role, catalyzes the ATP-dependent phosphorylation of L-homoserine to L-homoserine phosphate. The sequence is that of Homoserine kinase from Streptococcus mutans serotype c (strain ATCC 700610 / UA159).